Consider the following 283-residue polypeptide: Putative pyruvate, phosphate dikinase regulatory protein (283 aa).

Gly-156–Thr-163 contributes to the ADP binding site.

The protein belongs to the pyruvate, phosphate/water dikinase regulatory protein family. PDRP subfamily.

It carries out the reaction N(tele)-phospho-L-histidyl/L-threonyl-[pyruvate, phosphate dikinase] + ADP = N(tele)-phospho-L-histidyl/O-phospho-L-threonyl-[pyruvate, phosphate dikinase] + AMP + H(+). The catalysed reaction is N(tele)-phospho-L-histidyl/O-phospho-L-threonyl-[pyruvate, phosphate dikinase] + phosphate + H(+) = N(tele)-phospho-L-histidyl/L-threonyl-[pyruvate, phosphate dikinase] + diphosphate. In terms of biological role, bifunctional serine/threonine kinase and phosphorylase involved in the regulation of the pyruvate, phosphate dikinase (PPDK) by catalyzing its phosphorylation/dephosphorylation. This chain is Putative pyruvate, phosphate dikinase regulatory protein, found in Desulfotalea psychrophila (strain LSv54 / DSM 12343).